The chain runs to 263 residues: E3 ubiquitin-protein ligase SINA-like 8 (263 aa).

An RING-type; degenerate zinc finger spans residues 35 to 71; sequence CPICCEGLTCPIFQCENGHLACSSCCPKLRNKCPACP. Residues 75–261 are SBD; the sequence is ILESILVTCP…IKLSIVETSN (187 aa). The segment at 78–136 adopts an SIAH-type zinc-finger fold; the sequence is SILVTCPNDMFGCTESFLYGKKSTHEEECIFSLCSCPSLDCEYSGRYEDLYDHYKLTHI. Zn(2+) is bound by residues Cys-83, Cys-90, His-102, Cys-106, Cys-113, Cys-118, His-130, and His-135.

This sequence belongs to the SINA (Seven in absentia) family.

It carries out the reaction S-ubiquitinyl-[E2 ubiquitin-conjugating enzyme]-L-cysteine + [acceptor protein]-L-lysine = [E2 ubiquitin-conjugating enzyme]-L-cysteine + N(6)-ubiquitinyl-[acceptor protein]-L-lysine.. It functions in the pathway protein modification; protein ubiquitination. Its function is as follows. E3 ubiquitin-protein ligase that mediates ubiquitination and subsequent proteasomal degradation of target proteins. E3 ubiquitin ligases accept ubiquitin from an E2 ubiquitin-conjugating enzyme in the form of a thioester and then directly transfers the ubiquitin to targeted substrates. It probably triggers the ubiquitin-mediated degradation of different substrates. This is E3 ubiquitin-protein ligase SINA-like 8 from Arabidopsis thaliana (Mouse-ear cress).